We begin with the raw amino-acid sequence, 304 residues long: Quinolinate synthase (304 aa).

Residues histidine 24 and serine 41 each coordinate iminosuccinate. Cysteine 86 contributes to the [4Fe-4S] cluster binding site. Iminosuccinate contacts are provided by residues 112 to 114 (YVN) and serine 129. Cysteine 171 contributes to the [4Fe-4S] cluster binding site. Residues 197–199 (HPE) and threonine 214 contribute to the iminosuccinate site. [4Fe-4S] cluster is bound at residue cysteine 259.

It belongs to the quinolinate synthase family. Type 2 subfamily. It depends on [4Fe-4S] cluster as a cofactor.

It localises to the cytoplasm. The enzyme catalyses iminosuccinate + dihydroxyacetone phosphate = quinolinate + phosphate + 2 H2O + H(+). It functions in the pathway cofactor biosynthesis; NAD(+) biosynthesis; quinolinate from iminoaspartate: step 1/1. Catalyzes the condensation of iminoaspartate with dihydroxyacetone phosphate to form quinolinate. In Geotalea uraniireducens (strain Rf4) (Geobacter uraniireducens), this protein is Quinolinate synthase.